The following is a 230-amino-acid chain: MAKHGKRYLEAAKKVDSTKFYSVDEAMKLAKETSYANFDATIEVAYNLNVDPKQADQQIRGALVLPNGTGKSKKVVVFAEGPQADQAKEAGADEVGSDDLVEKVQNGYLDFDVVIATPMMMAKVGRLGRILGPKGLMPNPKTGTVTMDVAKAVENQKAGQVEYRVDKQGLIHAPIGKASFDAEKLAQNFDALRDVILRARPASTKGQYVKSVAVSATFGPGIHLDPLNLD.

This sequence belongs to the universal ribosomal protein uL1 family. As to quaternary structure, part of the 50S ribosomal subunit.

Functionally, binds directly to 23S rRNA. The L1 stalk is quite mobile in the ribosome, and is involved in E site tRNA release. Protein L1 is also a translational repressor protein, it controls the translation of the L11 operon by binding to its mRNA. This Lactobacillus johnsonii (strain CNCM I-12250 / La1 / NCC 533) protein is Large ribosomal subunit protein uL1.